Consider the following 357-residue polypeptide: MSQVRGSRVAVIGATGYGGLQTIRLLEDHPHLHVTYLGGERSAGRRWSELCPFLPILDDPEVQSPDPDKIAEFADYAVLSLPNGLACQLAPQLLKRNVRVVDLSADFRYRSLEQWKQVYVHEAQNLNRDDVQLCREAVYGLPEWKGPEIAVANLVAAPGCFPTASLLPLLPFLKQGLIENDGLIIDAKTGTSGGGRVAKEQFLLAEASESIMPYGVVGHRHTSEIEQLASEVAGQPIELQFTPHLVPMVRGLLATVYGRLRDPGLTAEDCTTVLKAVYRHHPCIDVLPVGTYPATKWVKYSNKAVLSVQVDNRNSRLVLMSAVDNLIKGQAGQGVQCLNLMAGLPPTTGMSLLTFYP.

The active site involves C160.

Belongs to the NAGSA dehydrogenase family. Type 1 subfamily.

Its subcellular location is the cytoplasm. It catalyses the reaction N-acetyl-L-glutamate 5-semialdehyde + phosphate + NADP(+) = N-acetyl-L-glutamyl 5-phosphate + NADPH + H(+). It participates in amino-acid biosynthesis; L-arginine biosynthesis; N(2)-acetyl-L-ornithine from L-glutamate: step 3/4. In terms of biological role, catalyzes the NADPH-dependent reduction of N-acetyl-5-glutamyl phosphate to yield N-acetyl-L-glutamate 5-semialdehyde. This is N-acetyl-gamma-glutamyl-phosphate reductase from Prochlorococcus marinus (strain MIT 9313).